Consider the following 497-residue polypeptide: Signal recognition particle receptor FtsY (497 aa).

Disordered regions lie at residues 1 to 63 and 79 to 130; these read MAKE…TEAE and AESE…EWQA. A compositionally biased stretch (low complexity) spans 87-96; it reads EAEVVAQPEP. GTP is bound by residues 300 to 307, 382 to 386, and 446 to 449; these read GVNGVGKT, DTAGR, and TKLD.

Belongs to the GTP-binding SRP family. FtsY subfamily. Part of the signal recognition particle protein translocation system, which is composed of SRP and FtsY. SRP is a ribonucleoprotein composed of Ffh and a 4.5S RNA molecule. Binds to SecY. In terms of processing, proteolytically cleaved. The cleavage may regulate function and subcellular location of FtsY. Full-length FtsY is found primarily associated with the membrane, while cleaved protein is predominantly present in the cytoplasm.

It is found in the cell inner membrane. The protein resides in the cytoplasm. The enzyme catalyses GTP + H2O = GDP + phosphate + H(+). Its activity is regulated as follows. Conformation of the Ffh-FtsY complex and regulation of its GTPase activity are modulated by the 4.5S RNA. Formation of the FfH-FtsY complex leads to a mutual stimulation of both GTPases. Involved in targeting and insertion of nascent membrane proteins into the cytoplasmic membrane. Acts as a receptor for the complex formed by the signal recognition particle (SRP) and the ribosome-nascent chain (RNC). Interaction with SRP-RNC leads to the transfer of the RNC complex to the Sec translocase for insertion into the membrane, the hydrolysis of GTP by both Ffh and FtsY, and the dissociation of the SRP-FtsY complex into the individual components. The chain is Signal recognition particle receptor FtsY from Escherichia coli (strain K12).